The following is a 78-amino-acid chain: Large ribosomal subunit protein bL28 (78 aa).

The segment at 1 to 20 (MSRVCQVTGKRPVTGNNRSH) is disordered.

It belongs to the bacterial ribosomal protein bL28 family.

The polypeptide is Large ribosomal subunit protein bL28 (Vibrio campbellii (strain ATCC BAA-1116)).